We begin with the raw amino-acid sequence, 187 residues long: Protein lethal(2)essential for life (187 aa).

The 110-residue stretch at 61–170 (NSLQKQESGS…TERLVQITQT (110 aa)) folds into the sHSP domain. The interval 151–187 (APMKALPPPQTERLVQITQTGPSSKEDNAKKVETSTA) is disordered. Basic and acidic residues predominate over residues 174–187 (SKEDNAKKVETSTA).

This sequence belongs to the small heat shock protein (HSP20) family. As to expression, ubiquitously expressed during embryogenesis with no sign of tissue specificity in expression up to stage 16.

Its function is as follows. Vital role in embryonic development. The chain is Protein lethal(2)essential for life (l(2)efl) from Drosophila melanogaster (Fruit fly).